A 462-amino-acid chain; its full sequence is Glutamate-1-semialdehyde 2,1-aminomutase (462 aa).

The segment at 178-200 is disordered; sequence DDPQRPASPRSQSSRGLPSSPGV. The segment covering 182-192 has biased composition (low complexity); that stretch reads RPASPRSQSSR. At Lys-297 the chain carries N6-(pyridoxal phosphate)lysine.

It belongs to the class-III pyridoxal-phosphate-dependent aminotransferase family. HemL subfamily. Homodimer. Pyridoxal 5'-phosphate is required as a cofactor.

The protein localises to the cytoplasm. The catalysed reaction is (S)-4-amino-5-oxopentanoate = 5-aminolevulinate. Its pathway is porphyrin-containing compound metabolism; protoporphyrin-IX biosynthesis; 5-aminolevulinate from L-glutamyl-tRNA(Glu): step 2/2. The sequence is that of Glutamate-1-semialdehyde 2,1-aminomutase (hemL) from Mycobacterium bovis (strain ATCC BAA-935 / AF2122/97).